Reading from the N-terminus, the 216-residue chain is Kynurenine formamidase (216 aa).

Tryptophan 25 is a binding site for substrate. Zn(2+) contacts are provided by histidine 55, histidine 59, and aspartate 61. Residue histidine 65 is the Proton donor/acceptor of the active site. Residues histidine 167 and glutamate 179 each coordinate Zn(2+).

The protein belongs to the Cyclase 1 superfamily. KynB family. As to quaternary structure, homodimer. Zn(2+) is required as a cofactor.

The catalysed reaction is N-formyl-L-kynurenine + H2O = L-kynurenine + formate + H(+). The protein operates within amino-acid degradation; L-tryptophan degradation via kynurenine pathway; L-kynurenine from L-tryptophan: step 2/2. In terms of biological role, catalyzes the hydrolysis of N-formyl-L-kynurenine to L-kynurenine, the second step in the kynurenine pathway of tryptophan degradation. This is Kynurenine formamidase from Cupriavidus taiwanensis (strain DSM 17343 / BCRC 17206 / CCUG 44338 / CIP 107171 / LMG 19424 / R1) (Ralstonia taiwanensis (strain LMG 19424)).